The chain runs to 94 residues: Co-chaperonin GroES (94 aa).

Belongs to the GroES chaperonin family. In terms of assembly, heptamer of 7 subunits arranged in a ring. Interacts with the chaperonin GroEL.

The protein localises to the cytoplasm. Together with the chaperonin GroEL, plays an essential role in assisting protein folding. The GroEL-GroES system forms a nano-cage that allows encapsulation of the non-native substrate proteins and provides a physical environment optimized to promote and accelerate protein folding. GroES binds to the apical surface of the GroEL ring, thereby capping the opening of the GroEL channel. The protein is Co-chaperonin GroES of Streptococcus agalactiae serotype III (strain NEM316).